We begin with the raw amino-acid sequence, 371 residues long: Fe(3+) ions import ATP-binding protein FbpC (371 aa).

Positions 5-235 constitute an ABC transporter domain; the sequence is IKIENAQKRY…PANLFVATFI (231 aa). 37-44 lines the ATP pocket; it reads GPSGCGKT.

It belongs to the ABC transporter superfamily. Fe(3+) ion importer (TC 3.A.1.10) family. As to quaternary structure, the complex is composed of two ATP-binding proteins (FbpC), two transmembrane proteins (FbpB) and a solute-binding protein (FbpA).

It is found in the cell inner membrane. The enzyme catalyses Fe(3+)(out) + ATP + H2O = Fe(3+)(in) + ADP + phosphate + H(+). Part of the ABC transporter complex FbpABC involved in Fe(3+) ions import. Responsible for energy coupling to the transport system. The protein is Fe(3+) ions import ATP-binding protein FbpC of Fusobacterium nucleatum subsp. nucleatum (strain ATCC 25586 / DSM 15643 / BCRC 10681 / CIP 101130 / JCM 8532 / KCTC 2640 / LMG 13131 / VPI 4355).